The chain runs to 241 residues: Capsid protein (241 aa).

The Bipartite nuclear localization signal signature appears at 1–26 (MSPASSWKRKRPSSSSAQASKKRRVY). The disordered stretch occupies residues 1–30 (MSPASSWKRKRPSSSSAQASKKRRVYRPAV).

This sequence belongs to the geminiviridae capsid protein family. As to quaternary structure, homomultimer. Interacts with the movement protein. Binds to single-stranded and double-stranded viral DNA.

Its subcellular location is the virion. The protein localises to the host nucleus. In terms of biological role, encapsidates the viral genome into characteristic twinned ('geminate') particles. Binds the genomic viral ssDNA and shuttles it into and out of the cell nucleus. Plays a role in protection of the genome from degradation, virus acquisition and transmission by insect vectors, infectivity, and systemic movement. The CP of monopartite geminiviruses is absolutely essential for virus movement. The chain is Capsid protein from Avena sativa (Oat).